The following is a 201-amino-acid chain: Holliday junction branch migration complex subunit RuvA (201 aa).

Residues 1 to 64 (MYAYIRGKLT…EDAQLLYGFI (64 aa)) are domain I. Residues 65-143 (NEEEKDMFLS…ITRETTETLL (79 aa)) form a domain II region. Residues 144-150 (SMNEENS) form a flexible linker region. The interval 151-201 (NSENLVKEALLALEALGYSKREISKVEKVLNKSTFDSVDEAVKLGLKTLVS) is domain III.

This sequence belongs to the RuvA family. In terms of assembly, homotetramer. Forms an RuvA(8)-RuvB(12)-Holliday junction (HJ) complex. HJ DNA is sandwiched between 2 RuvA tetramers; dsDNA enters through RuvA and exits via RuvB. An RuvB hexamer assembles on each DNA strand where it exits the tetramer. Each RuvB hexamer is contacted by two RuvA subunits (via domain III) on 2 adjacent RuvB subunits; this complex drives branch migration. In the full resolvosome a probable DNA-RuvA(4)-RuvB(12)-RuvC(2) complex forms which resolves the HJ.

Its subcellular location is the cytoplasm. Functionally, the RuvA-RuvB-RuvC complex processes Holliday junction (HJ) DNA during genetic recombination and DNA repair, while the RuvA-RuvB complex plays an important role in the rescue of blocked DNA replication forks via replication fork reversal (RFR). RuvA specifically binds to HJ cruciform DNA, conferring on it an open structure. The RuvB hexamer acts as an ATP-dependent pump, pulling dsDNA into and through the RuvAB complex. HJ branch migration allows RuvC to scan DNA until it finds its consensus sequence, where it cleaves and resolves the cruciform DNA. This Staphylococcus haemolyticus (strain JCSC1435) protein is Holliday junction branch migration complex subunit RuvA.